A 434-amino-acid polypeptide reads, in one-letter code: UDP-N-acetylmuramoylalanine--D-glutamate ligase (434 aa).

113–119 serves as a coordination point for ATP; the sequence is GSNGKST.

This sequence belongs to the MurCDEF family.

The protein localises to the cytoplasm. It carries out the reaction UDP-N-acetyl-alpha-D-muramoyl-L-alanine + D-glutamate + ATP = UDP-N-acetyl-alpha-D-muramoyl-L-alanyl-D-glutamate + ADP + phosphate + H(+). It functions in the pathway cell wall biogenesis; peptidoglycan biosynthesis. Functionally, cell wall formation. Catalyzes the addition of glutamate to the nucleotide precursor UDP-N-acetylmuramoyl-L-alanine (UMA). The polypeptide is UDP-N-acetylmuramoylalanine--D-glutamate ligase (Pasteurella multocida (strain Pm70)).